A 310-amino-acid polypeptide reads, in one-letter code: Homeobox protein dsc-1 (310 aa).

Positions 180–239 (RRRFRTNFTELQSTFLEDSFKESHYPDHKAKKYMADFLKIPEDRITVWFQNRRAKWRRKE) form a DNA-binding region, homeobox. The segment at 262-310 (CFSAQHPDDGPNAKHPNSFGIPNQPMSLDQFPMNTEQDFPEFPSLQEHQ) is disordered. Residues 281–298 (GIPNQPMSLDQFPMNTEQ) are compositionally biased toward polar residues.

As to expression, expressed in the bilateral sensory neurons AWA, AWB, AWC, ASE, FLP and PVD. Also expressed in the enteric intestinal and anal depressor muscles.

The protein localises to the nucleus. It is found in the cell projection. The protein resides in the axon. It localises to the cytoplasm. In terms of biological role, transcriptional regulator which plays a role in the expulsion step of defecation by controlling enteric muscle-specific expression of exp-1 which is required for enteric muscle contraction. Not required for exp-1 expression in the PDA neuron. Also involved in controlling the length of the defecation cycle. This Caenorhabditis elegans protein is Homeobox protein dsc-1.